A 161-amino-acid chain; its full sequence is ATP synthase subunit b 1 (161 aa).

A helical transmembrane segment spans residues 5 to 25 (PETWVAIAFLLLMGVFAYVGV).

Belongs to the ATPase B chain family. As to quaternary structure, F-type ATPases have 2 components, F(1) - the catalytic core - and F(0) - the membrane proton channel. F(1) has five subunits: alpha(3), beta(3), gamma(1), delta(1), epsilon(1). F(0) has three main subunits: a(1), b(2) and c(10-14). The alpha and beta chains form an alternating ring which encloses part of the gamma chain. F(1) is attached to F(0) by a central stalk formed by the gamma and epsilon chains, while a peripheral stalk is formed by the delta and b chains.

It localises to the cell inner membrane. F(1)F(0) ATP synthase produces ATP from ADP in the presence of a proton or sodium gradient. F-type ATPases consist of two structural domains, F(1) containing the extramembraneous catalytic core and F(0) containing the membrane proton channel, linked together by a central stalk and a peripheral stalk. During catalysis, ATP synthesis in the catalytic domain of F(1) is coupled via a rotary mechanism of the central stalk subunits to proton translocation. In terms of biological role, component of the F(0) channel, it forms part of the peripheral stalk, linking F(1) to F(0). The sequence is that of ATP synthase subunit b 1 from Nitrobacter winogradskyi (strain ATCC 25391 / DSM 10237 / CIP 104748 / NCIMB 11846 / Nb-255).